Here is a 76-residue protein sequence, read N- to C-terminus: XVAFETVPVDLMKGEHKQPAYLALQPFGTVPAVVDGDYXLLSAVLDVYEAHLHGYLAGDFVSLADLAHLPFTDYLV.

The 40-residue stretch at 1 to 40 folds into the GST N-terminal domain; the sequence is XVAFETVPVDLMKGEHKQPAYLALQPFGTVPAVVDGDYXL. One can recognise a GST C-terminal domain in the interval 41 to 76; that stretch reads LSAVLDVYEAHLHGYLAGDFVSLADLAHLPFTDYLV.

Belongs to the GST superfamily. Theta family.

The protein localises to the cytoplasm. The enzyme catalyses RX + glutathione = an S-substituted glutathione + a halide anion + H(+). Its function is as follows. Conjugation of reduced glutathione to a wide number of exogenous and endogenous hydrophobic electrophiles. This chain is Glutathione S-transferase, found in Brassica oleracea var. italica (Broccoli).